Reading from the N-terminus, the 131-residue chain is MRHRHGLRKLNRTSSHRQAMFRNMANALLRHEVIKTTLPKAKELRRVVEPMITLGKKPSLANRRLAFDRLRDREIVVKLFDELGPRYATRNGGYLRILKFGFRDGDNAPMALVELLDRPEAEVAEQEAVAA.

This sequence belongs to the bacterial ribosomal protein bL17 family. As to quaternary structure, part of the 50S ribosomal subunit. Contacts protein L32.

The sequence is that of Large ribosomal subunit protein bL17 from Azoarcus sp. (strain BH72).